We begin with the raw amino-acid sequence, 205 residues long: Small ribosomal subunit protein uS4 (205 aa).

Residues 26–47 are disordered; that stretch reads PVNKREYGPGQHGQRRKQKPSD. The S4 RNA-binding domain occupies 94 to 154; that stretch reads RRLDAVVYRL…EKSKHLAIVL (61 aa).

This sequence belongs to the universal ribosomal protein uS4 family. In terms of assembly, part of the 30S ribosomal subunit. Contacts protein S5. The interaction surface between S4 and S5 is involved in control of translational fidelity.

In terms of biological role, one of the primary rRNA binding proteins, it binds directly to 16S rRNA where it nucleates assembly of the body of the 30S subunit. With S5 and S12 plays an important role in translational accuracy. The chain is Small ribosomal subunit protein uS4 from Gluconacetobacter diazotrophicus (strain ATCC 49037 / DSM 5601 / CCUG 37298 / CIP 103539 / LMG 7603 / PAl5).